The sequence spans 292 residues: MSEIRLYVTTTEAKAEEILDLLSALFGEEDFAIGTTEIDEKKDIWEASIYMMAEDEAEVQSRVEDALKASFPDARLEREVIPEIDWVVKSLEGLKPVRAGRFLVHGSHDRDKIRPGDIAIEIDAGQAFGTGHHGTTAGCLEVIDSVVRSRPVRNALDLGTGSGVLAIAVRKLRNIPVLATDIDPIATKVAAENVRRNGIASGIVTRTAPGFHSTAFSEHGPFDLIIANILARPLIRMAPKLATHLAPGGSVILSGILAGQRWKVIAAYSGARLRHVKTIWRNGWVTIHLDRP.

4 residues coordinate S-adenosyl-L-methionine: Thr136, Gly159, Asp181, and Asn228.

The protein belongs to the methyltransferase superfamily. PrmA family.

The protein localises to the cytoplasm. The enzyme catalyses L-lysyl-[protein] + 3 S-adenosyl-L-methionine = N(6),N(6),N(6)-trimethyl-L-lysyl-[protein] + 3 S-adenosyl-L-homocysteine + 3 H(+). Methylates ribosomal protein L11. This is Ribosomal protein L11 methyltransferase from Rhizobium johnstonii (strain DSM 114642 / LMG 32736 / 3841) (Rhizobium leguminosarum bv. viciae).